The following is a 225-amino-acid chain: UPF0173 metal-dependent hydrolase PF1764 (225 aa).

The protein belongs to the UPF0173 family.

This chain is UPF0173 metal-dependent hydrolase PF1764, found in Pyrococcus furiosus (strain ATCC 43587 / DSM 3638 / JCM 8422 / Vc1).